Reading from the N-terminus, the 646-residue chain is RNase E specificity factor CsrD (646 aa).

Helical transmembrane passes span 10-30 and 135-155; these read FVTL…SLSF and MTTA…FLAV. Residues 152–219 are HAMP-like; sequence FLAVRWLQRQ…REQHSRLDTL (68 aa). Positions 194 to 224 form a coiled coil; sequence RTSSALDTLLREIQNAREQHSRLDTLIRSYA. The GGDEF domain occupies 254–387; that stretch reads THGIVMMIRL…GGNSWAIYDD (134 aa). The EAL domain maps to 396–644; it reads NVRWRTLIEQ…TNVKKYSQRY (249 aa).

The protein resides in the cell membrane. Serves as a specificity factor required for RNase E-mediated decay of the small global regulatory RNAs CsrB and CsrC, it is probably not a nuclease. Nor does its activity involve c-di-GMP, despite its domain composition. Positively modulates motility gene expression, is also required for curli expression. The sequence is that of RNase E specificity factor CsrD (csrD) from Escherichia coli (strain K12).